Consider the following 525-residue polypeptide: Putative EGF-like domain-containing protein R659 (525 aa).

Residues M1–G24 form the signal peptide. 6 N-linked (GlcNAc...) asparagine; by host glycosylation sites follow: N60, N77, N171, N181, N268, and N281. Residues L317–S359 enclose the EGF-like domain. 3 cysteine pairs are disulfide-bonded: C321/C330, C324/C345, and C347/C358. 2 N-linked (GlcNAc...) asparagine; by host glycosylation sites follow: N354 and N411.

The protein localises to the secreted. This Acanthamoeba polyphaga (Amoeba) protein is Putative EGF-like domain-containing protein R659.